We begin with the raw amino-acid sequence, 84 residues long: Keratin-associated protein 19-4 (84 aa).

This sequence belongs to the KRTAP type 19 family. In terms of assembly, interacts with hair keratins.

In the hair cortex, hair keratin intermediate filaments are embedded in an interfilamentous matrix, consisting of hair keratin-associated proteins (KRTAP), which are essential for the formation of a rigid and resistant hair shaft through their extensive disulfide bond cross-linking with abundant cysteine residues of hair keratins. The matrix proteins include the high-sulfur and high-glycine-tyrosine keratins. The chain is Keratin-associated protein 19-4 (KRTAP19-4) from Homo sapiens (Human).